The sequence spans 197 residues: Xanthine phosphoribosyltransferase (197 aa).

Xanthine contacts are provided by Leu-20 and Asn-27. 128 to 132 (ANGQA) contributes to the 5-phospho-alpha-D-ribose 1-diphosphate binding site. Position 156 (Lys-156) interacts with xanthine.

This sequence belongs to the purine/pyrimidine phosphoribosyltransferase family. Xpt subfamily. As to quaternary structure, homodimer.

The protein localises to the cytoplasm. The enzyme catalyses XMP + diphosphate = xanthine + 5-phospho-alpha-D-ribose 1-diphosphate. The protein operates within purine metabolism; XMP biosynthesis via salvage pathway; XMP from xanthine: step 1/1. Converts the preformed base xanthine, a product of nucleic acid breakdown, to xanthosine 5'-monophosphate (XMP), so it can be reused for RNA or DNA synthesis. The protein is Xanthine phosphoribosyltransferase of Bacillus cereus (strain ATCC 10987 / NRS 248).